The primary structure comprises 100 residues: Small ribosomal subunit protein uS14 (100 aa).

It belongs to the universal ribosomal protein uS14 family. Part of the 30S ribosomal subunit. Contacts proteins S3 and S10.

Its function is as follows. Binds 16S rRNA, required for the assembly of 30S particles and may also be responsible for determining the conformation of the 16S rRNA at the A site. In Prochlorococcus marinus (strain MIT 9301), this protein is Small ribosomal subunit protein uS14.